Consider the following 444-residue polypeptide: Enolase (444 aa).

The substrate site is built by His163 and Glu172. Glu215 acts as the Proton donor in catalysis. Mg(2+) contacts are provided by Asp250, Glu300, and Asp327. Residues Glu300 and Asp327 each contribute to the substrate site. Lys352 serves as the catalytic Proton acceptor. Substrate-binding positions include 379–382 (SHRS) and Lys403.

It belongs to the enolase family. In terms of assembly, homodimer. The cofactor is Mg(2+).

The protein localises to the cytoplasm. The enzyme catalyses (2R)-2-phosphoglycerate = phosphoenolpyruvate + H2O. Its pathway is carbohydrate degradation; glycolysis; pyruvate from D-glyceraldehyde 3-phosphate: step 4/5. In Solanum lycopersicum (Tomato), this protein is Enolase (PGH1).